The sequence spans 74 residues: Antimicrobial peptide 2 (74 aa).

The N-terminal stretch at 1–22 (MEIKYLLTVFLVLLIVSDHCQA) is a signal peptide. Lys40 is modified (lysine amide). Positions 46-74 (DLDGQIDRSRNFRKRDAELEELLSKLPIY) are excised as a propeptide.

As to expression, expressed by the venom gland.

The protein resides in the secreted. Its subcellular location is the target cell membrane. Functionally, has antibacterial activity against the Gram-positive bacteria S.aureus (MIC=48 uM), the Gram-negative bacteria E.coli (MIC=120 uM), and the yeast C.albicans (MIC=64 uM). Causes hemolysis on horse erythrocytes. The chain is Antimicrobial peptide 2 from Androctonus amoreuxi (African fattail scorpion).